Reading from the N-terminus, the 601-residue chain is Arginine--tRNA ligase (601 aa).

The short motif at 133-143 (PNTNKPLHLGH) is the 'HIGH' region element.

Belongs to the class-I aminoacyl-tRNA synthetase family. Monomer.

The protein localises to the cytoplasm. It carries out the reaction tRNA(Arg) + L-arginine + ATP = L-arginyl-tRNA(Arg) + AMP + diphosphate. The sequence is that of Arginine--tRNA ligase from Flavobacterium psychrophilum (strain ATCC 49511 / DSM 21280 / CIP 103535 / JIP02/86).